Reading from the N-terminus, the 88-residue chain is Small ribosomal subunit protein uS15 (88 aa).

The protein belongs to the universal ribosomal protein uS15 family. Part of the 30S ribosomal subunit. Forms a bridge to the 50S subunit in the 70S ribosome, contacting the 23S rRNA.

Its function is as follows. One of the primary rRNA binding proteins, it binds directly to 16S rRNA where it helps nucleate assembly of the platform of the 30S subunit by binding and bridging several RNA helices of the 16S rRNA. In terms of biological role, forms an intersubunit bridge (bridge B4) with the 23S rRNA of the 50S subunit in the ribosome. The sequence is that of Small ribosomal subunit protein uS15 from Geobacter metallireducens (strain ATCC 53774 / DSM 7210 / GS-15).